The sequence spans 854 residues: Protein asteroid (854 aa).

Residues 368 to 427 (SEEECSDDEHSSSSDEKFSDVEEGEDQEEADNQDEEQQEENQDVDSGDEEEEEADEGLEL) form a disordered region. Residues 375–387 (DEHSSSSDEKFSD) show a composition bias toward basic and acidic residues. Residues 388–427 (VEEGEDQEEADNQDEEQQEENQDVDSGDEEEEEADEGLEL) are compositionally biased toward acidic residues.

It belongs to the asteroid family. In terms of tissue distribution, expressed in the proliferative tissues of embryos and in the mitotically active tissue anterior to the morphogenetic furrow in eye imaginal disks.

In terms of biological role, may function in EGF receptor signaling. May play a role in compound eye morphogenesis. In Drosophila melanogaster (Fruit fly), this protein is Protein asteroid (ast).